The chain runs to 438 residues: Glutaryl-CoA dehydrogenase, mitochondrial (438 aa).

The N-terminal 44 residues, 1 to 44 (MALRGVSVRLLSRGPGLHVLRTWVSSAAQTEKGGRTQSQLAKSS), are a transit peptide targeting the mitochondrion. Residues 138-139 (RS) and S186 contribute to the substrate site. Residues 177–186 (FGLTEPNSGS) and 212–214 (WIT) each bind FAD. Position 240 is an N6-acetyllysine (K240). Substrate is bound at residue 287-294 (FGCLNNAR). FAD is bound by residues R319, Q330, and 387-391 (DMLGG). The active-site Proton acceptor is E414. G415 serves as a coordination point for substrate. Residues 416-418 (THD) and F434 each bind FAD.

This sequence belongs to the acyl-CoA dehydrogenase family. Homotetramer. The cofactor is FAD. In terms of tissue distribution, isoform Long and isoform Short are expressed in fibroblasts and liver.

The protein resides in the mitochondrion matrix. It carries out the reaction glutaryl-CoA + oxidized [electron-transfer flavoprotein] + 2 H(+) = (2E)-butenoyl-CoA + reduced [electron-transfer flavoprotein] + CO2. The protein operates within amino-acid metabolism; lysine degradation. It functions in the pathway amino-acid metabolism; tryptophan metabolism. With respect to regulation, strongly inhibited by MCPA-CoA, a metabolite of hypoglycin which is present in unripened fruit of the ackee tree. Catalyzes the oxidative decarboxylation of glutaryl-CoA to crotonyl-CoA and CO(2) in the degradative pathway of L-lysine, L-hydroxylysine, and L-tryptophan metabolism. It uses electron transfer flavoprotein as its electron acceptor. Isoform Short is inactive. In Homo sapiens (Human), this protein is Glutaryl-CoA dehydrogenase, mitochondrial (GCDH).